The chain runs to 624 residues: E3 ubiquitin-protein ligase RLIM (624 aa).

Met-1 bears the N-acetylmethionine mark. Basic and acidic residues predominate over residues 1 to 11 (MENSDSNDKGS). Disordered stretches follow at residues 1 to 25 (MENSDSNDKGSGDQSAAQRRSQMDR), 72 to 251 (KEGP…SQTF), 257 to 276 (NETEGSSRTRHHVTLRQQIS), 291 to 363 (TRNA…RGGF), and 424 to 522 (SDSE…TFDE). A compositionally biased stretch (polar residues) spans 104-132 (SVRQTGNTTRSGQRGNQSWRAVSRTNPNS). Residues 142–153 (NVNRNNGSQNSE) are compositionally biased toward low complexity. Phosphoserine is present on Ser-164. Positions 165-188 (GENVENNSQRQVENPRSESTSARP) are enriched in polar residues. Phosphoserine is present on residues Ser-195, Ser-228, Ser-230, and Ser-276. Residues 214–229 (RSPDHRRTRARAERSR) show a composition bias toward basic and acidic residues. A compositionally biased stretch (polar residues) spans 291 to 315 (TRNASQGAGSSDTAASGESTGSGQR). Positions 329–339 (RPGEYRQRDSI) are enriched in basic and acidic residues. The span at 340-356 (ASRTRSRSQTPNNTVTY) shows a compositional bias: polar residues. Residues 445 to 454 (GRGGSGGGSS) are compositionally biased toward gly residues. Low complexity predominate over residues 455-507 (SGSSSSSSSSSSSSSSSSSSSSPSSSSGGESSETSSDLFEGSNEGSSSSGSSG). The RING-type zinc finger occupies 570–611 (CSVCITEYTEGNKLRKLPCSHEYHVHCIDRWLSENSTCPICR). Residues 621 to 624 (ESVV) carry the PDZ-binding motif.

This sequence belongs to the RNF12 family. Interacts with LIM/homeobox factors such as LHX3. Interacts with LDB1, LDB2 and SIN3A. Interacts with LIMK1. Interacts (via N-terminus) with TERF1. Interacts (via C-terminus) with ESR1. As to expression, expressed in many tissues.

It is found in the nucleus. The catalysed reaction is S-ubiquitinyl-[E2 ubiquitin-conjugating enzyme]-L-cysteine + [acceptor protein]-L-lysine = [E2 ubiquitin-conjugating enzyme]-L-cysteine + N(6)-ubiquitinyl-[acceptor protein]-L-lysine.. Its pathway is protein modification; protein ubiquitination. E3 ubiquitin-protein ligase. Acts as a negative coregulator for LIM homeodomain transcription factors by mediating the ubiquitination and subsequent degradation of LIM cofactors LDB1 and LDB2 and by mediating the recruitment the SIN3a/histone deacetylase corepressor complex. Ubiquitination and degradation of LIM cofactors LDB1 and LDB2 allows DNA-bound LIM homeodomain transcription factors to interact with other protein partners such as RLIM. Plays a role in telomere length-mediated growth suppression by mediating the ubiquitination and degradation of TERF1. By targeting ZFP42 for degradation, acts as an activator of random inactivation of X chromosome in the embryo, a stochastic process in which one X chromosome is inactivated to minimize sex-related dosage differences of X-encoded genes in somatic cells of female placental mammals. This is E3 ubiquitin-protein ligase RLIM (RLIM) from Homo sapiens (Human).